Here is a 694-residue protein sequence, read N- to C-terminus: ATP-binding cassette sub-family G member 8 (694 aa).

At 1 to 437 (MAEKTKEETQ…ISNDFRDLPT (437 aa)) the chain is on the cytoplasmic side. Residues 91–335 (AQFKLPWRSR…FTSIGYPCPR (245 aa)) enclose the ABC transporter domain. The ABC transmembrane type-2 domain occupies 436–684 (PTLFIHGAEA…FLSLYYLSLK (249 aa)). Residues 438–458 (LFIHGAEACLMSLIIGFLYYG) traverse the membrane as a helical segment. Over 459-468 (HADKPLSFMD) the chain is Extracellular. The chain crosses the membrane as a helical span at residues 469–489 (MAALLFMIGALIPFNVILDVV). Over 490–518 (SKCHSERSLLYYELEDGLYTAGPYFFAKV) the chain is Cytoplasmic. A helical transmembrane segment spans residues 519–539 (LGELPEHCAYVIIYGMPIYWL). Residues 540 to 548 (TNLRPGPEL) are Extracellular-facing. Residues 549 to 569 (FLLHFMLLWLVVFCCRTMALA) traverse the membrane as a helical segment. The Cytoplasmic portion of the chain corresponds to 570–576 (ASAMLPT). Residues 577 to 597 (FHMSSFCCNALYNSFYLTAGF) traverse the membrane as a helical segment. The Extracellular portion of the chain corresponds to 598–660 (MINLNNLWIV…VTAMDLNSHP (63 aa)). N-linked (GlcNAc...) asparagine glycosylation occurs at Asn640. The chain crosses the membrane as a helical span at residues 661–681 (LYAIYLIVIGISCGFLSLYYL). Residues 682-694 (SLKFIKQKSIQDW) lie on the Cytoplasmic side of the membrane.

The protein belongs to the ABC transporter superfamily. ABCG family. Eye pigment precursor importer (TC 3.A.1.204) subfamily. In terms of assembly, heterodimer with ABCG8. Requires Mg(2+) as cofactor. Post-translationally, N-glycosylated. N-glycosylation is important for efficient export out of the endoplasmic reticulum. Highest expression in liver, with lower levels in small intestine and colon.

The protein resides in the cell membrane. The protein localises to the apical cell membrane. It carries out the reaction cholesterol(in) + ATP + H2O = cholesterol(out) + ADP + phosphate + H(+). The enzyme catalyses sitosterol(in) + ATP + H2O = sitosterol(out) + ADP + phosphate + H(+). ABCG5 and ABCG8 form an obligate heterodimer that mediates Mg(2+)- and ATP-dependent sterol transport across the cell membrane. Plays an essential role in the selective transport of the dietary cholesterol in and out of the enterocytes and in the selective sterol excretion by the liver into bile. Required for normal sterol homeostasis. The heterodimer with ABCG5 has ATPase activity. This Rattus norvegicus (Rat) protein is ATP-binding cassette sub-family G member 8.